A 317-amino-acid polypeptide reads, in one-letter code: uncharacterized protein (317 aa).

Residues 1–11 (MASAGAERRPG) are compositionally biased toward basic and acidic residues. The segment at 1–164 (MASAGAERRP…KAKKRKSLGA (164 aa)) is disordered. Residues 19 to 34 (GQGQLTEEPGSAQTSE) are compositionally biased toward polar residues. 2 stretches are compositionally biased toward basic and acidic residues: residues 47–58 (HEARGTQSEDQR) and 71–92 (EGPK…ERGP). 2 stretches are compositionally biased toward basic residues: residues 100-110 (RPRHGPKRKPV) and 151-161 (KQHKKAKKRKS).

This is an uncharacterized protein from Homo sapiens (Human).